The primary structure comprises 303 residues: Probable RuBisCO transcriptional regulator (303 aa).

The region spanning 6-63 is the HTH lysR-type domain; it reads FTLDQLRIFQAIVVEGSFQKAAQSLYISQPAVSLQIQNLEQQLNAPLFDRSHRKAKLT. Positions 23-42 form a DNA-binding region, H-T-H motif; sequence FQKAAQSLYISQPAVSLQIQ.

This sequence belongs to the LysR transcriptional regulatory family.

The protein resides in the plastid. The protein localises to the chloroplast. Trans-acting transcriptional regulator of RuBisCO genes (rbcL and rbcS) expression. In Cyanidioschyzon merolae (strain NIES-3377 / 10D) (Unicellular red alga), this protein is Probable RuBisCO transcriptional regulator (rbcR).